A 440-amino-acid polypeptide reads, in one-letter code: Enolase (440 aa).

Residue Q163 coordinates (2R)-2-phosphoglycerate. Catalysis depends on E205, which acts as the Proton donor. The Mg(2+) site is built by D242, E288, and D315. Residues K340, R369, S370, and K391 each coordinate (2R)-2-phosphoglycerate. K340 functions as the Proton acceptor in the catalytic mechanism.

It belongs to the enolase family. Mg(2+) serves as cofactor.

The protein localises to the cytoplasm. It is found in the secreted. The protein resides in the cell surface. It catalyses the reaction (2R)-2-phosphoglycerate = phosphoenolpyruvate + H2O. The protein operates within carbohydrate degradation; glycolysis; pyruvate from D-glyceraldehyde 3-phosphate: step 4/5. In terms of biological role, catalyzes the reversible conversion of 2-phosphoglycerate (2-PG) into phosphoenolpyruvate (PEP). It is essential for the degradation of carbohydrates via glycolysis. The sequence is that of Enolase from Pediococcus pentosaceus (strain ATCC 25745 / CCUG 21536 / LMG 10740 / 183-1w).